Reading from the N-terminus, the 201-residue chain is 3-isopropylmalate dehydratase small subunit (201 aa).

Belongs to the LeuD family. LeuD type 1 subfamily. Heterodimer of LeuC and LeuD.

The catalysed reaction is (2R,3S)-3-isopropylmalate = (2S)-2-isopropylmalate. Its pathway is amino-acid biosynthesis; L-leucine biosynthesis; L-leucine from 3-methyl-2-oxobutanoate: step 2/4. In terms of biological role, catalyzes the isomerization between 2-isopropylmalate and 3-isopropylmalate, via the formation of 2-isopropylmaleate. The protein is 3-isopropylmalate dehydratase small subunit of Nitrobacter hamburgensis (strain DSM 10229 / NCIMB 13809 / X14).